Here is a 91-residue protein sequence, read N- to C-terminus: UPF0250 protein Psyr_4360 (91 aa).

This sequence belongs to the UPF0250 family.

This chain is UPF0250 protein Psyr_4360, found in Pseudomonas syringae pv. syringae (strain B728a).